The following is a 105-amino-acid chain: Chloroacetanilide N-alkylformylase 1, ferredoxin component (105 aa).

In terms of domain architecture, 2Fe-2S ferredoxin-type spans 2-105 (PTIIVTTRDG…GLRVAIAPED (104 aa)). Cys-40, Cys-46, Cys-49, and Cys-86 together coordinate [2Fe-2S] cluster.

It belongs to the adrenodoxin/putidaredoxin family. As to quaternary structure, the chloroacetanilide N-alkylformylase multicomponent enzyme system is composed of an oxygenase component (CndA) and an electron transfer component formed by a ferredoxin reductase (CndC1) and a ferredoxin (CndB1). In vitro, chloroacetanilide N-alkylformylase assays in which CndB1 is substituted for CndB2 demonstrate that the two enzymes possess nearly identical activities. It depends on [2Fe-2S] cluster as a cofactor.

Component of the chloroacetanilide N-alkylformylase multicomponent enzyme system involved in the degradation of chloroacetanilide herbicides (N-alkoxyalkyl-N-chloroacetyl-substituted aniline derivatives). In vitro, functions as an intermediate electron transfer protein. This Rhizorhabdus wittichii (strain DC-6 / KACC 16600) (Sphingomonas wittichii) protein is Chloroacetanilide N-alkylformylase 1, ferredoxin component.